A 355-amino-acid polypeptide reads, in one-letter code: Guanine nucleotide-binding protein G(z) subunit alpha (355 aa).

Positions Met-1 to Arg-14 are enriched in basic and acidic residues. A disordered region spans residues Met-1–Glu-26. A lipid anchor (N-myristoyl glycine) is attached at Gly-2. A lipid anchor (S-palmitoyl cysteine) is attached at Cys-3. The G-alpha domain occupies Arg-32–Cys-355. The segment at Lys-35–Thr-48 is G1 motif. Residues Gly-40–Ser-47, Leu-176–Thr-182, Asp-201–Gln-205, Asn-270–Asp-273, and Ala-327 each bind GTP. Ser-47 and Thr-182 together coordinate Mg(2+). The segment at Asp-174 to Thr-182 is G2 motif. Residues Phe-197–Arg-206 are G3 motif. Residues Ile-266 to Asp-273 are G4 motif. The G5 motif stretch occupies residues Thr-325–Thr-330.

Belongs to the G-alpha family. G(i/o/t/z) subfamily. In terms of assembly, G-proteins are composed of 3 units; alpha, beta and gamma. The alpha chain contains the guanine nucleotide binding site. Interacts with ADGRB2.

It localises to the membrane. Functionally, guanine nucleotide-binding proteins (G proteins) are involved as modulators or transducers in various transmembrane signaling systems. The chain is Guanine nucleotide-binding protein G(z) subunit alpha (Gnaz) from Mus musculus (Mouse).